Consider the following 455-residue polypeptide: Argininosuccinate lyase (455 aa).

It belongs to the lyase 1 family. Argininosuccinate lyase subfamily.

The protein localises to the cytoplasm. It catalyses the reaction 2-(N(omega)-L-arginino)succinate = fumarate + L-arginine. Its pathway is amino-acid biosynthesis; L-arginine biosynthesis; L-arginine from L-ornithine and carbamoyl phosphate: step 3/3. This is Argininosuccinate lyase from Shewanella baltica (strain OS195).